A 248-amino-acid chain; its full sequence is MILFPAIDLKGGQCVRLKLGDMQQATVYNTDPAAQAKSFEDQGFEWLHVVDLDGAFAGHSANGDAVEAILKATKNPVQLGGGIRTLDHIEAWLSRGLRRVILGTVAVRNPDLVIEACRKFPGHVAVGIDAKGGKVAVEGWAEASELGVIELARKFEGAGVAAIIYTDIDRDGILAGINWTSTLELAEAVSIPVIASGGLASLDDVRRMLEPDAQKLEGAISGRALYDGRIDPAEALALIKASRAKETA.

The active-site Proton acceptor is the Asp8. Catalysis depends on Asp129, which acts as the Proton donor.

It belongs to the HisA/HisF family.

The protein localises to the cytoplasm. It carries out the reaction 1-(5-phospho-beta-D-ribosyl)-5-[(5-phospho-beta-D-ribosylamino)methylideneamino]imidazole-4-carboxamide = 5-[(5-phospho-1-deoxy-D-ribulos-1-ylimino)methylamino]-1-(5-phospho-beta-D-ribosyl)imidazole-4-carboxamide. Its pathway is amino-acid biosynthesis; L-histidine biosynthesis; L-histidine from 5-phospho-alpha-D-ribose 1-diphosphate: step 4/9. This chain is 1-(5-phosphoribosyl)-5-[(5-phosphoribosylamino)methylideneamino] imidazole-4-carboxamide isomerase, found in Rhizobium leguminosarum bv. trifolii (strain WSM2304).